The following is a 577-amino-acid chain: Arginine--tRNA ligase (577 aa).

A 'HIGH' region motif is present at residues 122-132 (PNVAKEMHVGH).

Belongs to the class-I aminoacyl-tRNA synthetase family. As to quaternary structure, monomer.

The protein localises to the cytoplasm. The enzyme catalyses tRNA(Arg) + L-arginine + ATP = L-arginyl-tRNA(Arg) + AMP + diphosphate. The chain is Arginine--tRNA ligase from Haemophilus influenzae (strain PittGG).